A 180-amino-acid chain; its full sequence is ATP synthase subunit delta (180 aa).

This sequence belongs to the ATPase delta chain family. In terms of assembly, F-type ATPases have 2 components, F(1) - the catalytic core - and F(0) - the membrane proton channel. F(1) has five subunits: alpha(3), beta(3), gamma(1), delta(1), epsilon(1). F(0) has three main subunits: a(1), b(2) and c(10-14). The alpha and beta chains form an alternating ring which encloses part of the gamma chain. F(1) is attached to F(0) by a central stalk formed by the gamma and epsilon chains, while a peripheral stalk is formed by the delta and b chains.

The protein localises to the cell membrane. In terms of biological role, f(1)F(0) ATP synthase produces ATP from ADP in the presence of a proton or sodium gradient. F-type ATPases consist of two structural domains, F(1) containing the extramembraneous catalytic core and F(0) containing the membrane proton channel, linked together by a central stalk and a peripheral stalk. During catalysis, ATP synthesis in the catalytic domain of F(1) is coupled via a rotary mechanism of the central stalk subunits to proton translocation. Its function is as follows. This protein is part of the stalk that links CF(0) to CF(1). It either transmits conformational changes from CF(0) to CF(1) or is implicated in proton conduction. The chain is ATP synthase subunit delta from Latilactobacillus sakei subsp. sakei (strain 23K) (Lactobacillus sakei subsp. sakei).